Consider the following 170-residue polypeptide: Small ribosomal subunit protein uS5 (170 aa).

Residues 12-75 enclose the S5 DRBM domain; that stretch reads LSELLVSVRR…NAAKKSMIRV (64 aa).

This sequence belongs to the universal ribosomal protein uS5 family. In terms of assembly, part of the 30S ribosomal subunit. Contacts proteins S4 and S8.

With S4 and S12 plays an important role in translational accuracy. In terms of biological role, located at the back of the 30S subunit body where it stabilizes the conformation of the head with respect to the body. The polypeptide is Small ribosomal subunit protein uS5 (Wolbachia pipientis wMel).